The following is a 505-amino-acid chain: Calcium/calmodulin-dependent protein kinase kinase 1 (505 aa).

Residues 26 to 61 form a disordered region; it reads THLEEADGGPEPTRNGVDPPPRARAASVIPGSTSRL. A phosphoserine mark is found at S67 and S74. At R78 the chain carries Asymmetric dimethylarginine. S100 carries the phosphoserine modification. A Phosphothreonine modification is found at T108. Positions 128–409 constitute a Protein kinase domain; it reads YKLQSEIGKG…VPDIKLHPWV (282 aa). ATP contacts are provided by residues 134 to 142 and K157; that span reads IGKGAYGVV. An RP domain region spans residues 167-189; that stretch reads QYGFPRRPPPRGSQAAQGGPAKQ. D275 (proton acceptor) is an active-site residue. Residues 435–440 are autoinhibitory domain; sequence KNSVRL. The calmodulin-binding stretch occupies residues 438–463; sequence VRLIPSWTTVILVKSMLRKRSFGNPF. S458, S475, and S492 each carry phosphoserine. Residues 460–505 form a disordered region; sequence GNPFEPQARREERSMSAPGNLLVKEGFGEGGKSPELPGVQEDEAAS.

This sequence belongs to the protein kinase superfamily. Ser/Thr protein kinase family. As to quaternary structure, interacts with CAMK4 and calmodulin. Appears to be autophosphorylated in a Ca(2+)/calmodulin-dependent manner. Phosphorylated at multiple sites by PRCAKA/PKA. Phosphorylation of Ser-458 is blocked upon binding to Ca(2+)/calmodulin. In vitro, phosphorylated by CAMK1 and CAMK4.

It localises to the cytoplasm. Its subcellular location is the nucleus. It carries out the reaction L-seryl-[protein] + ATP = O-phospho-L-seryl-[protein] + ADP + H(+). The enzyme catalyses L-threonyl-[protein] + ATP = O-phospho-L-threonyl-[protein] + ADP + H(+). Activated by Ca(2+)/calmodulin. Binding of calmodulin may relieve intrasteric autoinhibition. Partially inhibited upon phosphorylation by PRCAKA/PKA. May be regulated through phosphorylation by CAMK1 and CAMK4. In terms of biological role, calcium/calmodulin-dependent protein kinase that belongs to a proposed calcium-triggered signaling cascade involved in a number of cellular processes. Phosphorylates CAMK1, CAMK1D, CAMK1G and CAMK4. Involved in regulating cell apoptosis. Promotes cell survival by phosphorylating AKT1/PKB that inhibits pro-apoptotic BAD/Bcl2-antagonist of cell death. This Homo sapiens (Human) protein is Calcium/calmodulin-dependent protein kinase kinase 1 (CAMKK1).